The chain runs to 217 residues: Ribulose-phosphate 3-epimerase (217 aa).

S6 is a substrate binding site. The a divalent metal cation site is built by H29, D31, and H62. D31 (proton acceptor) is an active-site residue. Substrate-binding positions include H62, 138-141 (GFGG), 171-173 (DGG), and 193-194 (GS). An a divalent metal cation-binding site is contributed by D171. D171 functions as the Proton donor in the catalytic mechanism.

It belongs to the ribulose-phosphate 3-epimerase family. The cofactor is a divalent metal cation.

It catalyses the reaction D-ribulose 5-phosphate = D-xylulose 5-phosphate. The protein operates within carbohydrate degradation. Functionally, catalyzes the reversible epimerization of D-ribulose 5-phosphate to D-xylulose 5-phosphate. The polypeptide is Ribulose-phosphate 3-epimerase (Helicobacter pylori (strain ATCC 700392 / 26695) (Campylobacter pylori)).